We begin with the raw amino-acid sequence, 276 residues long: Putative non-heme chloroperoxidase (276 aa).

The 238-residue stretch at 26–263 folds into the AB hydrolase-1 domain; the sequence is PIVLIHGFPL…GGPHAINWTH (238 aa). Active-site residues include Ser99, Asp228, and His257.

This sequence belongs to the AB hydrolase superfamily. Bacterial non-heme haloperoxidase / perhydrolase family.

The chain is Putative non-heme chloroperoxidase from Synechocystis sp. (strain ATCC 27184 / PCC 6803 / Kazusa).